The sequence spans 682 residues: NAD(+)--arginine ADP-ribosyltransferase (682 aa).

Residues 383-614 (KIIRRELRGY…KLIQAEVMTT (232 aa)) enclose the TR mART core domain. Catalysis depends on residues arginine 478, serine 503, and glutamate 576.

Belongs to the Tevenvirinae NAD(+)--arginine ADP-ribosyltransferase family. In terms of processing, proteolytic cleavages at the N- and C-termini by the prohead core protein protease give rise to the mature enzyme.

The protein resides in the virion. It carries out the reaction L-arginyl-[protein] + NAD(+) = N(omega)-(ADP-D-ribosyl)-L-arginyl-[protein] + nicotinamide + H(+). In terms of biological role, ADP-ribosyltransferase that efficiently ADP-ribosylates one of the two alpha subunits of host RNA polymerase RPOA on an arginine located in the C-terminal region. ADP-ribosylation of RPOA alpha subunit enhances the transcription of viral early genes. Also ribosylates RPOA subunits beta, beta' and sigma 70 and performs an autoribosylation reaction. Additional in-vitro identified targets include proteins involved in either translation or cellular metabolism such as elongation factor-Tu or GroeL. Mono-ADP-ribosylates host MAZF which may inactivate the latter. This is NAD(+)--arginine ADP-ribosyltransferase (alt) from Escherichia coli (Bacteriophage T4).